The chain runs to 210 residues: Placenta-expressed transcript 1 protein (210 aa).

An N-terminal signal peptide occupies residues 1–26; it reads MAVLGSPLLPLRLFLCFGLLFFSASC. Topologically, residues 27 to 189 are extracellular; that stretch reads TDHPDQCMIF…THKNSANRVF (163 aa). N-linked (GlcNAc...) asparagine glycans are attached at residues Asn-67 and Asn-94. Residues 190–209 form a helical membrane-spanning segment; sequence RSPVRDAIQILLAFLTSKLL. Phe-210 is a topological domain (cytoplasmic).

In terms of tissue distribution, highly expressed in placenta.

Its subcellular location is the membrane. It is found in the apical cell membrane. Functionally, modulates leading keratinocyte migration and cellular adhesion to matrix proteins during a wound-healing response and promotes wound repair. May play a role during trichilemmal differentiation of the hair follicle. In Sus scrofa (Pig), this protein is Placenta-expressed transcript 1 protein (PLET1).